Consider the following 217-residue polypeptide: Tegument protein BKRF4 (217 aa).

Residues M1–L217 form a disordered region. The span at Y32–I42 shows a compositional bias: polar residues. The span at Q43–D79 shows a compositional bias: acidic residues. The interaction with host histones H3/H4 stretch occupies residues D63–L64. Positions D81–W84 are interaction with host H2A/H2B. Acidic residues predominate over residues S89 to A102. The segment covering S106–R132 has biased composition (low complexity). Positions R136–A145 are enriched in pro residues. Residues G208 to L217 show a composition bias toward polar residues.

The protein belongs to the lymphocryptovirus BKRF4 family. In terms of assembly, forms a complex with the host H3/H4 dimer and histone chaperone ASF1. Also forms a complex with host H2A/H2B dimer. Interacts (via C-terminus) with BGLF2; this interaction is important for infectious virion production.

The protein localises to the virion tegument. The protein resides in the host nucleus. It is found in the host cytoplasm. Its subcellular location is the host perinuclear region. In terms of biological role, histone-binding protein that binds to histones H2A/H2B, H3/H4 and cellular chromatin to overcome the host DNA damage response triggered by the viral genome ends. Interferes with histone ubiquitination and recruitment of repair proteins. The polypeptide is Tegument protein BKRF4 (Epstein-Barr virus (strain GD1) (HHV-4)).